The primary structure comprises 653 residues: 23S rRNA 5-hydroxycytidine C2501 synthase (653 aa).

The protein belongs to the peptidase U32 family. In terms of assembly, interacts with precursors of the 50S ribosomal subunit.

Iron-sulfur clusters and prephenate are required for ho5C2501 formation. Its function is as follows. Responsible for the formation of the 5-hydroxycytidine modification at the C2501 position (ho5C2501) of 23S rRNA. May be a Fe-S protein that catalyzes ho5C2501 formation using prephenate as a hydroxyl group donor. In Escherichia coli (strain K12), this protein is 23S rRNA 5-hydroxycytidine C2501 synthase.